The sequence spans 728 residues: FAD-dependent monooxygenase avaB (728 aa).

The helical transmembrane segment at 17 to 37 (VIDLLLTFFFYSGLYGLIAAK) threads the bilayer. The span at 50-64 (NQQCENTDDVPQSFQ) shows a compositional bias: polar residues. A disordered region spans residues 50-72 (NQQCENTDDVPQSFQRPRDTRST). V168 provides a ligand contact to FAD. 490–491 (DL) is a binding site for NADP(+).

It belongs to the FAD-binding monooxygenase family. The cofactor is FAD.

It localises to the membrane. It participates in secondary metabolite metabolism. Functionally, multifunctional FAD-dependent monooxygenase; part of the cluster that mediates the biosynthesis of a highly modified cyclo-arginine-tryptophan dipeptide (cRW). Within the pathway, avaB uses the avaA cyclo-arginine-tryptophan dipeptide (cRW) as substrate to generate the cyclo-Arg-formylkynurenine diketopiperazine (DKP). AvaB also catalyzes an additional N-oxidation of the avaC product which is followed by cyclization and dehydration. The first step of the pathway is perfornmed by the arginine-containing cyclodipeptide synthase (RCPDS) avaA that acts as the scaffold-generating enzyme and is responsible for formation of the cyclo-Arg-Trp (cRW) diketopiperazine. AvaB then acts as a multifunctional flavoenzyme that is responsible for generating the cyclo-Arg-formylkynurenine DKP, which can be deformylated by avaC. AvaB then further catalyzes an additional N-oxidation followed by cyclization and dehydration. The next step is an N-acetylation of the guanidine group catalyzed by the arginine N-acetyltransferase avaD. The roles of the additional enzymes identified within the ava cluster still have to be determined. The protein is FAD-dependent monooxygenase avaB of Aspergillus versicolor.